A 148-amino-acid chain; its full sequence is Aspartate carbamoyltransferase regulatory chain (148 aa).

Zn(2+)-binding residues include Cys-106, Cys-111, Cys-134, and Cys-137.

It belongs to the PyrI family. As to quaternary structure, contains catalytic and regulatory chains. It depends on Zn(2+) as a cofactor.

Its function is as follows. Involved in allosteric regulation of aspartate carbamoyltransferase. This chain is Aspartate carbamoyltransferase regulatory chain, found in Methanococcus maripaludis (strain C7 / ATCC BAA-1331).